A 94-amino-acid chain; its full sequence is Integration host factor subunit beta (94 aa).

Belongs to the bacterial histone-like protein family. As to quaternary structure, heterodimer of an alpha and a beta chain.

This protein is one of the two subunits of integration host factor, a specific DNA-binding protein that functions in genetic recombination as well as in transcriptional and translational control. The sequence is that of Integration host factor subunit beta from Yersinia pseudotuberculosis serotype O:1b (strain IP 31758).